The chain runs to 152 residues: Superoxide dismutase [Cu-Zn] (152 aa).

Cu cation-binding residues include H45, H47, and H62. A disulfide bond links C56 and C145. Zn(2+) is bound by residues H62, H70, H79, and D82. Position 119 (H119) interacts with Cu cation.

Belongs to the Cu-Zn superoxide dismutase family. In terms of assembly, homodimer. The cofactor is Cu cation. It depends on Zn(2+) as a cofactor.

It localises to the cytoplasm. It catalyses the reaction 2 superoxide + 2 H(+) = H2O2 + O2. Destroys radicals which are normally produced within the cells and which are toxic to biological systems. The polypeptide is Superoxide dismutase [Cu-Zn] (SODCC) (Paulownia kawakamii (Dragon tree)).